The chain runs to 495 residues: 1-aminocyclopropane-1-carboxylate synthase 6 (495 aa).

Residues Glu-58 and Tyr-96 each coordinate substrate. Lys-280 is modified (N6-(pyridoxal phosphate)lysine). Ser-480, Ser-483, and Ser-488 each carry phosphoserine.

This sequence belongs to the class-I pyridoxal-phosphate-dependent aminotransferase family. Homodimer and heterodimer. In vivo, the relevance of heterodimerization with other ACS enzymes is however unsure. Interacts with GRF3. Requires pyridoxal 5'-phosphate as cofactor. Phosphorylated on serine residue by MAP kinase (MPK6). Post-translationally, may be processed at its C-terminus. In terms of tissue distribution, expressed in roots and flowers.

The enzyme catalyses S-adenosyl-L-methionine = 1-aminocyclopropane-1-carboxylate + S-methyl-5'-thioadenosine + H(+). The protein operates within alkene biosynthesis; ethylene biosynthesis via S-adenosyl-L-methionine; ethylene from S-adenosyl-L-methionine: step 1/2. Functionally, 1-aminocyclopropane-1-carboxylate synthase (ACS) enzymes catalyze the conversion of S-adenosyl-L-methionine (SAM) into 1-aminocyclopropane-1-carboxylate (ACC), a direct precursor of ethylene. Involved in bacterial flagellin-induced ethylene production. The polypeptide is 1-aminocyclopropane-1-carboxylate synthase 6 (ACS6) (Arabidopsis thaliana (Mouse-ear cress)).